A 396-amino-acid chain; its full sequence is E3 ubiquitin-protein transferase MAEA (396 aa).

Positions 1 to 124 (MAVQESAVQL…AAASVWKRKR (124 aa)) are extracellular and involved in cell to cell contact. At Thr-28 the chain carries Phosphothreonine. The LisH domain occupies 121 to 153 (KRKRMDRMMVEHLLRCGYYNTAVKLARQSGIED). The region spanning 159 to 216 (MFLTAKEVEESLERRETATCLAWCHDNKSRLRKMKSCLEFSLRIQEFIELIRQNKRLD) is the CTLH domain. The segment at 314–381 (CPVCSRSLNK…QDDKVVCPRT (68 aa)) adopts an RING-Gid-type zinc-finger fold.

Identified in the CTLH complex that contains GID4, RANBP9 and/or RANBP10, MKLN1, MAEA, RMND5A (or alternatively its paralog RMND5B), GID8, ARMC8, WDR26 and YPEL5. Within this complex, MAEA, RMND5A (or alternatively its paralog RMND5B), GID8, WDR26, and RANBP9 and/or RANBP10 form the catalytic core, while GID4, MKLN1, ARMC8 and YPEL5 have ancillary roles. Interacts with F-actin. In terms of processing, autoubiquitinated as component of the CTLH E3 ubiquitin-protein ligase complex (in vitro).

It is found in the cytoplasm. The protein localises to the nucleus. Its subcellular location is the nucleoplasm. The protein resides in the nucleus matrix. It localises to the cell membrane. It is found in the cytoskeleton. The enzyme catalyses S-ubiquitinyl-[E2 ubiquitin-conjugating enzyme]-L-cysteine + [acceptor protein]-L-lysine = [E2 ubiquitin-conjugating enzyme]-L-cysteine + N(6)-ubiquitinyl-[acceptor protein]-L-lysine.. Its function is as follows. Core component of the CTLH E3 ubiquitin-protein ligase complex that selectively accepts ubiquitin from UBE2H and mediates ubiquitination and subsequent proteasomal degradation of the transcription factor HBP1. MAEA and RMND5A are both required for catalytic activity of the CTLH E3 ubiquitin-protein ligase complex. MAEA is required for normal cell proliferation. The CTLH E3 ubiquitin-protein ligase complex is not required for the degradation of enzymes involved in gluconeogenesis, such as FBP1. Plays a role in erythroblast enucleation during erythrocyte maturation and in the development of mature macrophages. Mediates the attachment of erythroid cell to mature macrophages; this MAEA-mediated contact inhibits erythroid cell apoptosis. Participates in erythroblastic island formation, which is the functional unit of definitive erythropoiesis. Associates with F-actin to regulate actin distribution in erythroblasts and macrophages. May contribute to nuclear architecture and cells division events. This Macaca fascicularis (Crab-eating macaque) protein is E3 ubiquitin-protein transferase MAEA (MAEA).